The following is a 189-amino-acid chain: Pyridoxal 5'-phosphate synthase subunit PdxT (189 aa).

L-glutamine is bound at residue Gly-48–Ser-50. Residue Cys-80 is the Nucleophile of the active site. Residues Arg-107 and Ile-136–Arg-137 each bind L-glutamine. Residues His-172 and Glu-174 each act as charge relay system in the active site.

The protein belongs to the glutaminase PdxT/SNO family. As to quaternary structure, in the presence of PdxS, forms a dodecamer of heterodimers. Only shows activity in the heterodimer.

The enzyme catalyses aldehydo-D-ribose 5-phosphate + D-glyceraldehyde 3-phosphate + L-glutamine = pyridoxal 5'-phosphate + L-glutamate + phosphate + 3 H2O + H(+). It catalyses the reaction L-glutamine + H2O = L-glutamate + NH4(+). It participates in cofactor biosynthesis; pyridoxal 5'-phosphate biosynthesis. Its function is as follows. Catalyzes the hydrolysis of glutamine to glutamate and ammonia as part of the biosynthesis of pyridoxal 5'-phosphate. The resulting ammonia molecule is channeled to the active site of PdxS. This is Pyridoxal 5'-phosphate synthase subunit PdxT from Ruminiclostridium cellulolyticum (strain ATCC 35319 / DSM 5812 / JCM 6584 / H10) (Clostridium cellulolyticum).